Consider the following 87-residue polypeptide: Omega-theraphotoxin-Gr1a (87 aa).

The first 24 residues, 1–24 (MKAQIFVVVLGLAALSVLCYGSEA), serve as a signal peptide directing secretion. A propeptide spanning residues 25 to 49 (DESALHEEIFQLLAASDEVPKPQER) is cleaved from the precursor. 3 cysteine pairs are disulfide-bonded: Cys51–Cys65, Cys58–Cys70, and Cys64–Cys79. Val85 bears the Valine amide mark.

Expressed by the venom gland.

Its subcellular location is the secreted. Functionally, inhibits P/Q- (Cav2.1/CACNA1A) and N-type (Cav2.2/CACNA1B) voltage-gated calcium channel by modifying voltage-dependent gating. It selectively and reversibly blocks the calcium channels coupled to glutamate release. Also inhibits potassium channels (Kv2.1/KCNB1) with lower affinity. Has also been shown to weakly inhibit Kv11.1/KCNH2/ERG1, Kv1.2/KCNA2, Kv1.3/KCNA3, Nav1.5/SCN5A, Nav1.7/SCN9A and TRPV1. The polypeptide is Omega-theraphotoxin-Gr1a (Grammostola rosea (Chilean rose tarantula)).